We begin with the raw amino-acid sequence, 440 residues long: Xaa-Pro dipeptidase (440 aa).

Positions 244, 255, 335, 380, and 419 each coordinate Mn(2+).

It belongs to the peptidase M24B family. Bacterial-type prolidase subfamily. Mn(2+) is required as a cofactor.

The catalysed reaction is Xaa-L-Pro dipeptide + H2O = an L-alpha-amino acid + L-proline. Splits dipeptides with a prolyl residue in the C-terminal position. The chain is Xaa-Pro dipeptidase from Shewanella pealeana (strain ATCC 700345 / ANG-SQ1).